We begin with the raw amino-acid sequence, 544 residues long: CTP synthase (544 aa).

The amidoligase domain stretch occupies residues 1 to 267 (MAKFVFITGG…CREVLDVLDL (267 aa)). Ser-13 contributes to the CTP binding site. Residue Ser-13 participates in UTP binding. ATP is bound by residues 14–19 (SIGKGI) and Asp-71. Mg(2+) is bound by residues Asp-71 and Glu-141. CTP-binding positions include 148 to 150 (DIE), 188 to 193 (KTKPTQ), and Lys-224. UTP-binding positions include 188–193 (KTKPTQ) and Lys-224. In terms of domain architecture, Glutamine amidotransferase type-1 spans 292-534 (KVALVGKYIQ…IEAAQQRLPS (243 aa)). Gly-354 contacts L-glutamine. Cys-381 functions as the Nucleophile; for glutamine hydrolysis in the catalytic mechanism. Residues 382 to 385 (LGMQ), Glu-405, and Arg-462 each bind L-glutamine. Active-site residues include His-507 and Glu-509.

It belongs to the CTP synthase family. As to quaternary structure, homotetramer.

The enzyme catalyses UTP + L-glutamine + ATP + H2O = CTP + L-glutamate + ADP + phosphate + 2 H(+). It carries out the reaction L-glutamine + H2O = L-glutamate + NH4(+). The catalysed reaction is UTP + NH4(+) + ATP = CTP + ADP + phosphate + 2 H(+). The protein operates within pyrimidine metabolism; CTP biosynthesis via de novo pathway; CTP from UDP: step 2/2. With respect to regulation, allosterically activated by GTP, when glutamine is the substrate; GTP has no effect on the reaction when ammonia is the substrate. The allosteric effector GTP functions by stabilizing the protein conformation that binds the tetrahedral intermediate(s) formed during glutamine hydrolysis. Inhibited by the product CTP, via allosteric rather than competitive inhibition. In terms of biological role, catalyzes the ATP-dependent amination of UTP to CTP with either L-glutamine or ammonia as the source of nitrogen. Regulates intracellular CTP levels through interactions with the four ribonucleotide triphosphates. In Parasynechococcus marenigrum (strain WH8102), this protein is CTP synthase.